The following is a 623-amino-acid chain: Xaa-Pro aminopeptidase 1 (623 aa).

Residue R77 participates in a peptide binding. The residue at position 304 (K304) is an N6-acetyllysine. Position 395 (H395) interacts with a peptide. Mn(2+)-binding residues include D415, D426, and H489. A peptide is bound by residues H489, H498, and E523. Mn(2+) is bound by residues E523 and E537.

Belongs to the peptidase M24B family. Homodimer. It depends on Mn(2+) as a cofactor.

It localises to the cytoplasm. It is found in the cytosol. The catalysed reaction is Release of any N-terminal amino acid, including proline, that is linked to proline, even from a dipeptide or tripeptide.. Functionally, metalloaminopeptidase that catalyzes the removal of a penultimate prolyl residue from the N-termini of peptides, such as Arg-Pro-Pro. Contributes to the degradation of bradykinin. This chain is Xaa-Pro aminopeptidase 1 (XPNPEP1), found in Bos taurus (Bovine).